We begin with the raw amino-acid sequence, 328 residues long: GMP reductase (328 aa).

The active-site Thioimidate intermediate is Cys176. Residue Ile205 to Val228 coordinates NADP(+).

This sequence belongs to the IMPDH/GMPR family. GuaC type 2 subfamily.

It carries out the reaction IMP + NH4(+) + NADP(+) = GMP + NADPH + 2 H(+). In terms of biological role, catalyzes the irreversible NADPH-dependent deamination of GMP to IMP. It functions in the conversion of nucleobase, nucleoside and nucleotide derivatives of G to A nucleotides, and in maintaining the intracellular balance of A and G nucleotides. This is GMP reductase from Bacillus thuringiensis (strain Al Hakam).